A 214-amino-acid polypeptide reads, in one-letter code: Adenylate kinase (214 aa).

Residue 10–15 (GAGKGT) participates in ATP binding. The tract at residues 30–59 (STGDMFRDHKARGTEIGKQVQAIMDAGGLV) is NMP. Residues threonine 31, arginine 36, 57–59 (GLV), 85–88 (GYPR), and glutamine 92 contribute to the AMP site. An LID region spans residues 126–163 (GRRSCPRCGAVYHVSQNPPHRAGFCDRDDTALVQREDD). Residue arginine 127 coordinates ATP. Residues cysteine 130 and cysteine 133 each contribute to the Zn(2+) site. 136–137 (VY) is an ATP binding site. Zn(2+) contacts are provided by cysteine 150 and aspartate 153. The AMP site is built by arginine 160 and arginine 171. ATP is bound at residue glycine 199.

It belongs to the adenylate kinase family. In terms of assembly, monomer.

The protein resides in the cytoplasm. The enzyme catalyses AMP + ATP = 2 ADP. The protein operates within purine metabolism; AMP biosynthesis via salvage pathway; AMP from ADP: step 1/1. Its function is as follows. Catalyzes the reversible transfer of the terminal phosphate group between ATP and AMP. Plays an important role in cellular energy homeostasis and in adenine nucleotide metabolism. This Anaeromyxobacter sp. (strain K) protein is Adenylate kinase.